The sequence spans 127 residues: Profilin (127 aa).

This sequence belongs to the profilin family. In terms of assembly, occurs in many kinds of cells as a complex with monomeric actin in a 1:1 ratio.

Its subcellular location is the cytoplasm. The protein localises to the cytoskeleton. In terms of biological role, binds to actin and affects the structure of the cytoskeleton. At high concentrations, profilin prevents the polymerization of actin, whereas it enhances it at low concentrations. By binding to PIP2, it inhibits the formation of IP3 and DG. In S.pombe, it is essential for cytokinesis. In Schizosaccharomyces pombe (strain 972 / ATCC 24843) (Fission yeast), this protein is Profilin (cdc3).